The chain runs to 378 residues: Isobutylamine N-hydroxylase (378 aa).

In terms of assembly, exists in dimeric or trimeric form depending upon buffer conditions. It can form an isobutylamine N-hydroxylase two component enzyme system formed of a flavin reductase component (VlmR) and a monooxygenase component (VlmH).

It catalyses the reaction 2-methylpropan-1-amine + FADH2 + O2 = N-(2-methylpropyl)hydroxylamine + FAD + H2O + 2 H(+). The enzyme catalyses 2-methylpropan-1-amine + FMNH2 + O2 = N-(2-methylpropyl)hydroxylamine + FMN + H2O + 2 H(+). With respect to regulation, inhibited by 5',5'-dithio-bis(2-nitrobenzoic acid) (DTNB) and 4-(hydroxymercuri)benzoic acid (p-HMB). Functionally, involved in the biosynthesis of the azoxy antibiotic valanimycin, which has an antitumor activity. Catalyzes the oxidation of isobutylamine to isobutylhydroxylamine via the formation of a flavin 4a-hydroperoxide. Unlike other known N-hydroxylases, isobutylamine N-hydroxylase cannot carry out the reduction of the flavin cofactor and requires the NADPH-flavin oxidoreductase VlmR. Also able to oxidize propan-1-amine, butan-1-amine, butan-2-amine and benzylamine. It has a similar activity with either FMNH(2) or FADH(2). This Streptomyces viridifaciens protein is Isobutylamine N-hydroxylase.